Consider the following 280-residue polypeptide: Phosphonoacetaldehyde hydrolase (280 aa).

D23 (nucleophile) is an active-site residue. The Mg(2+) site is built by D23 and A25. K64 functions as the Schiff-base intermediate with substrate in the catalytic mechanism. D197 is a binding site for Mg(2+).

The protein belongs to the HAD-like hydrolase superfamily. PhnX family. As to quaternary structure, homodimer. Requires Mg(2+) as cofactor.

It catalyses the reaction phosphonoacetaldehyde + H2O = acetaldehyde + phosphate + H(+). Functionally, involved in phosphonate degradation. The sequence is that of Phosphonoacetaldehyde hydrolase from Bordetella avium (strain 197N).